Here is a 393-residue protein sequence, read N- to C-terminus: Flavohemoprotein (393 aa).

The region spanning 1-139 is the Globin domain; the sequence is MLSNAQRALI…LADLLIEAEE (139 aa). Histidine 85 provides a ligand contact to heme b. Residues tyrosine 95 and glutamate 138 each act as charge relay system in the active site. The reductase stretch occupies residues 150-393; that stretch reads GGWRGVRRFR…FFGPAAALDA (244 aa). In terms of domain architecture, FAD-binding FR-type spans 153-256; sequence RGVRRFRVAR…FPPAGDFVLR (104 aa). FAD is bound by residues tyrosine 191 and 205–208; that span reads RNYS. NADP(+) is bound at residue 268 to 273; it reads GVGITP. 384–387 provides a ligand contact to FAD; sequence FFGP.

Belongs to the globin family. Two-domain flavohemoproteins subfamily. This sequence in the C-terminal section; belongs to the flavoprotein pyridine nucleotide cytochrome reductase family. Heme b is required as a cofactor. FAD serves as cofactor.

It catalyses the reaction 2 nitric oxide + NADPH + 2 O2 = 2 nitrate + NADP(+) + H(+). The catalysed reaction is 2 nitric oxide + NADH + 2 O2 = 2 nitrate + NAD(+) + H(+). In terms of biological role, is involved in NO detoxification in an aerobic process, termed nitric oxide dioxygenase (NOD) reaction that utilizes O(2) and NAD(P)H to convert NO to nitrate, which protects the bacterium from various noxious nitrogen compounds. Therefore, plays a central role in the inducible response to nitrosative stress. This chain is Flavohemoprotein, found in Pseudomonas aeruginosa (strain ATCC 15692 / DSM 22644 / CIP 104116 / JCM 14847 / LMG 12228 / 1C / PRS 101 / PAO1).